Here is a 346-residue protein sequence, read N- to C-terminus: UDP-N-acetylenolpyruvoylglucosamine reductase (346 aa).

Residues L18–H189 form the FAD-binding PCMH-type domain. R165 is a catalytic residue. Catalysis depends on S240, which acts as the Proton donor. The active site involves E336.

Belongs to the MurB family. Requires FAD as cofactor.

Its subcellular location is the cytoplasm. The catalysed reaction is UDP-N-acetyl-alpha-D-muramate + NADP(+) = UDP-N-acetyl-3-O-(1-carboxyvinyl)-alpha-D-glucosamine + NADPH + H(+). Its pathway is cell wall biogenesis; peptidoglycan biosynthesis. Functionally, cell wall formation. The chain is UDP-N-acetylenolpyruvoylglucosamine reductase from Neisseria gonorrhoeae (strain ATCC 700825 / FA 1090).